We begin with the raw amino-acid sequence, 386 residues long: Methionine aminopeptidase 1 (386 aa).

Ala2 carries the N-acetylalanine modification. A C6H2-type zinc finger spans residues Thr6 to Lys59. Zn(2+)-binding residues include Cys9, Cys14, Cys22, Cys25, Cys36, Cys40, His48, His52, and Lys53. His203 contributes to the a protein binding site. Residues Asp220, Asp231, and His294 each contribute to the Zn(2+) site. His301 contributes to the a protein binding site. The Zn(2+) site is built by Glu327 and Glu358.

The protein belongs to the peptidase M24A family. Methionine aminopeptidase type 1 subfamily. In terms of assembly, associates with the 60S ribosomal subunit of the 80S translational complex. Requires Zn(2+) as cofactor. It depends on Co(2+) as a cofactor. Mn(2+) is required as a cofactor. Fe(2+) serves as cofactor.

It localises to the cytoplasm. It carries out the reaction Release of N-terminal amino acids, preferentially methionine, from peptides and arylamides.. Functionally, cotranslationally removes the N-terminal methionine from nascent proteins. The N-terminal methionine is often cleaved when the second residue in the primary sequence is small and uncharged (Met-Ala-, Cys, Gly, Pro, Ser, Thr, or Val). In Mus musculus (Mouse), this protein is Methionine aminopeptidase 1 (Metap1).